Consider the following 1460-residue polypeptide: ABC transporter C family member 5 (1460 aa).

Disordered regions lie at residues 1 to 23 and 37 to 68; these read MKYNNLENDDSDIHNNNNNNESE and GNNNNDINNNNNINNNNDSLDYENNKGSKKKN. Over residues 37–55 the composition is skewed to low complexity; that stretch reads GNNNNDINNNNNINNNNDS. The next 5 helical transmembrane spans lie at 196–216, 238–258, 320–340, 425–445, and 456–476; these read FALSWVHFGLNVISQFIGPIF, LGYYYALILFVNSMLGSIFLY, LIFAVPMIIVSMILLYDCVGW, LIVVVQSIPTIISIFMFTVYY, and IFAAVAYLNIIRVPFTFLPYG. Residues 196–482 enclose the ABC transmembrane type-1 1 domain; the sequence is FALSWVHFGL…LPYGYNIYIQ (287 aa). Positions 537–567 are disordered; it reads IKPQTNPPPPRTTPSNDKSSPSGNNSNNEKK. Residues 551–563 are compositionally biased toward polar residues; it reads SNDKSSPSGNNSN. One can recognise an ABC transporter 1 domain in the interval 560–783; the sequence is NNSNNEKKEV…INSAYGNSSL (224 aa). An ATP-binding site is contributed by 593–600; it reads GPVGSGKS. Helical transmembrane passes span 842-862, 922-942, 1014-1034, and 1108-1128; these read MYYVTAGGGFLFLIALLGYCI, AGEFLGVFIAIGVLTVLLIIV, ILVIISIATPWLLLPMTPIII, and WLGLRLSVLGNLITLLSCIFI. Positions 853–1166 constitute an ABC transmembrane type-1 2 domain; that stretch reads FLIALLGYCI…ATQQLAELET (314 aa). The ABC transporter 2 domain occupies 1210–1444; sequence IIFENVVMSY…ENSLFNWLID (235 aa). Residue 1244–1251 participates in ATP binding; it reads GRTGSGKS.

The protein belongs to the ABC transporter superfamily. ABCC family. Conjugate transporter (TC 3.A.1.208) subfamily.

Its subcellular location is the membrane. The polypeptide is ABC transporter C family member 5 (abcC5) (Dictyostelium discoideum (Social amoeba)).